Consider the following 229-residue polypeptide: GTP cyclohydrolase 1 (229 aa).

The segment at 1–21 (MDAKIKPLRAGKSADARTDFQ) is disordered. Residues cysteine 118, histidine 121, and cysteine 189 each coordinate Zn(2+).

Belongs to the GTP cyclohydrolase I family. As to quaternary structure, toroid-shaped homodecamer, composed of two pentamers of five dimers.

It carries out the reaction GTP + H2O = 7,8-dihydroneopterin 3'-triphosphate + formate + H(+). It participates in cofactor biosynthesis; 7,8-dihydroneopterin triphosphate biosynthesis; 7,8-dihydroneopterin triphosphate from GTP: step 1/1. The protein is GTP cyclohydrolase 1 of Rhodopseudomonas palustris (strain HaA2).